Reading from the N-terminus, the 131-residue chain is Arsenate reductase 1 (131 aa).

Catalysis depends on nucleophile residues C10, C82, and C89. Intrachain disulfides connect C10-C82 and C82-C89.

It belongs to the low molecular weight phosphotyrosine protein phosphatase family. Thioredoxin-coupled ArsC subfamily.

It is found in the cytoplasm. It carries out the reaction arsenate + [thioredoxin]-dithiol + H(+) = arsenite + [thioredoxin]-disulfide + H2O. In terms of biological role, catalyzes the reduction of arsenate [As(V)] to arsenite [As(III)]. This is Arsenate reductase 1 from Staphylococcus saprophyticus subsp. saprophyticus (strain ATCC 15305 / DSM 20229 / NCIMB 8711 / NCTC 7292 / S-41).